A 76-amino-acid chain; its full sequence is MAARRGRAKRRKVCYFTANGITHIDYKDVDLLRRFISERGKILPRRVTGTSAKYQRKLTIAIKRARTMALLPYVAD.

Belongs to the bacterial ribosomal protein bS18 family. Part of the 30S ribosomal subunit. Forms a tight heterodimer with protein bS6.

Its function is as follows. Binds as a heterodimer with protein bS6 to the central domain of the 16S rRNA, where it helps stabilize the platform of the 30S subunit. The sequence is that of Small ribosomal subunit protein bS18 from Oceanobacillus iheyensis (strain DSM 14371 / CIP 107618 / JCM 11309 / KCTC 3954 / HTE831).